Here is a 372-residue protein sequence, read N- to C-terminus: Lipoyl synthase, mitochondrial (372 aa).

[4Fe-4S] cluster contacts are provided by cysteine 106, cysteine 111, cysteine 117, cysteine 137, cysteine 141, cysteine 144, and serine 352. One can recognise a Radical SAM core domain in the interval 122–341 (EYGTATATIM…EKAGNELGFL (220 aa)).

This sequence belongs to the radical SAM superfamily. Lipoyl synthase family. It depends on [4Fe-4S] cluster as a cofactor.

It localises to the mitochondrion. The enzyme catalyses [[Fe-S] cluster scaffold protein carrying a second [4Fe-4S](2+) cluster] + N(6)-octanoyl-L-lysyl-[protein] + 2 oxidized [2Fe-2S]-[ferredoxin] + 2 S-adenosyl-L-methionine + 4 H(+) = [[Fe-S] cluster scaffold protein] + N(6)-[(R)-dihydrolipoyl]-L-lysyl-[protein] + 4 Fe(3+) + 2 hydrogen sulfide + 2 5'-deoxyadenosine + 2 L-methionine + 2 reduced [2Fe-2S]-[ferredoxin]. It participates in protein modification; protein lipoylation via endogenous pathway; protein N(6)-(lipoyl)lysine from octanoyl-[acyl-carrier-protein]: step 2/2. Catalyzes the radical-mediated insertion of two sulfur atoms into the C-6 and C-8 positions of the octanoyl moiety bound to the lipoyl domains of lipoate-dependent enzymes, thereby converting the octanoylated domains into lipoylated derivatives. This chain is Lipoyl synthase, mitochondrial (lias), found in Xenopus laevis (African clawed frog).